Here is a 141-residue protein sequence, read N- to C-terminus: Large ribosomal subunit protein uL11 (141 aa).

Belongs to the universal ribosomal protein uL11 family. As to quaternary structure, part of the ribosomal stalk of the 50S ribosomal subunit. Interacts with L10 and the large rRNA to form the base of the stalk. L10 forms an elongated spine to which L12 dimers bind in a sequential fashion forming a multimeric L10(L12)X complex. One or more lysine residues are methylated.

Functionally, forms part of the ribosomal stalk which helps the ribosome interact with GTP-bound translation factors. In Limosilactobacillus fermentum (strain NBRC 3956 / LMG 18251) (Lactobacillus fermentum), this protein is Large ribosomal subunit protein uL11.